A 111-amino-acid chain; its full sequence is MSDIFRFDTEEQTLTKEKIKLKKPSKYRVIILNDDFTPMEFVVWILQMVFHRSRAESQQIMLKAHITGKALCGVYSHDVARTKVAQVQQLAEQHGYPLHCTMEVEEGEEES.

Belongs to the ClpS family. Binds to the N-terminal domain of the chaperone ClpA.

Involved in the modulation of the specificity of the ClpAP-mediated ATP-dependent protein degradation. This Leptospira interrogans serogroup Icterohaemorrhagiae serovar copenhageni (strain Fiocruz L1-130) protein is ATP-dependent Clp protease adapter protein ClpS.